Here is a 138-residue protein sequence, read N- to C-terminus: Ribosome-binding factor A (138 aa).

Belongs to the RbfA family. As to quaternary structure, monomer. Binds 30S ribosomal subunits, but not 50S ribosomal subunits or 70S ribosomes.

It is found in the cytoplasm. Its function is as follows. One of several proteins that assist in the late maturation steps of the functional core of the 30S ribosomal subunit. Associates with free 30S ribosomal subunits (but not with 30S subunits that are part of 70S ribosomes or polysomes). Required for efficient processing of 16S rRNA. May interact with the 5'-terminal helix region of 16S rRNA. In Sodalis glossinidius (strain morsitans), this protein is Ribosome-binding factor A.